A 434-amino-acid chain; its full sequence is Transcription elongation factor B polypeptide 3 (434 aa).

The tract at residues 142–161 is disordered; the sequence is KPEPVDVHEQQASSSSMSYQ. Positions 151-160 are enriched in polar residues; sequence QQASSSSMSY. The segment at 221-230 is BC box; it reads TLVSLCQTVL. Residues 237–281 form the F-box domain; the sequence is IDHVGIVPFDLLKPVLDHASTDQLRHILDVNPMLVEDADEMFHEM. Positions 391 to 415 are disordered; that stretch reads ITPRGGGVPSTSRSRSNNNNNMNNG.

Heterotrimer of an A, B and C subunit.

The protein resides in the nucleus. Functionally, SIII, also known as elongin, is a general transcription elongation factor that increases the RNA polymerase II transcription elongation past template-encoded arresting sites. Subunit A is transcriptionally active and its transcription activity is strongly enhanced by binding to the dimeric complex of the SIII regulatory subunits B and C (elongin BC complex). This chain is Transcription elongation factor B polypeptide 3, found in Caenorhabditis elegans.